The sequence spans 321 residues: Anthranilate phosphoribosyltransferase (321 aa).

Residues Gly-72, 75–76, Thr-80, 82–85, 99–107, and Ser-111 each bind 5-phospho-alpha-D-ribose 1-diphosphate; these read GD, NVST, and KHGNVSVTS. Residue Gly-72 coordinates anthranilate. Ser-84 lines the Mg(2+) pocket. Asn-102 contacts anthranilate. An anthranilate-binding site is contributed by Arg-157. Mg(2+) is bound by residues Asp-216 and Glu-217.

This sequence belongs to the anthranilate phosphoribosyltransferase family. Homodimer. Mg(2+) is required as a cofactor.

The catalysed reaction is N-(5-phospho-beta-D-ribosyl)anthranilate + diphosphate = 5-phospho-alpha-D-ribose 1-diphosphate + anthranilate. It functions in the pathway amino-acid biosynthesis; L-tryptophan biosynthesis; L-tryptophan from chorismate: step 2/5. In terms of biological role, catalyzes the transfer of the phosphoribosyl group of 5-phosphorylribose-1-pyrophosphate (PRPP) to anthranilate to yield N-(5'-phosphoribosyl)-anthranilate (PRA). This is Anthranilate phosphoribosyltransferase from Methanococcus vannielii (strain ATCC 35089 / DSM 1224 / JCM 13029 / OCM 148 / SB).